A 610-amino-acid polypeptide reads, in one-letter code: Zinc metalloproteinase-disintegrin-like BITM06A (610 aa).

The first 20 residues, 1–20, serve as a signal peptide directing secretion; the sequence is MIQVLLVTICLAAFPYQGSS. A propeptide spanning residues 21 to 189 is cleaved from the precursor; sequence IILESGNVND…KKASQLVVTA (169 aa). The 197-residue stretch at 198-394 folds into the Peptidase M12B domain; the sequence is RYVELFIVVD…ENPQCILNEP (197 aa). Ca(2+) contacts are provided by Glu-201 and Asp-285. 3 disulfide bridges follow: Cys-309-Cys-389, Cys-349-Cys-373, and Cys-351-Cys-356. His-334 contributes to the Zn(2+) binding site. The active site involves Glu-335. The Zn(2+) site is built by His-338 and His-344. A glycan (N-linked (GlcNAc...) asparagine) is linked at Asn-372. Ca(2+) is bound by residues Cys-389, Asn-392, Val-404, Asn-407, Leu-409, Glu-411, Glu-414, and Asp-417. The Disintegrin domain maps to 402-488; it reads PPVCGNELLE…ECPADVFHKN (87 aa). Cystine bridges form between Cys-405–Cys-434, Cys-416–Cys-429, Cys-418–Cys-424, Cys-428–Cys-451, Cys-442–Cys-448, Cys-447–Cys-473, Cys-460–Cys-480, Cys-467–Cys-499, Cys-492–Cys-504, Cys-511–Cys-561, Cys-526–Cys-572, Cys-539–Cys-549, Cys-556–Cys-598, and Cys-592–Cys-603. Residues 466 to 468 carry the D/ECD-tripeptide motif; that stretch reads ECD. 5 residues coordinate Ca(2+): Asp-468, Pro-469, Glu-471, Asp-483, and Val-484.

The protein belongs to the venom metalloproteinase (M12B) family. P-III subfamily. P-IIIa sub-subfamily. In terms of assembly, monomer. It depends on Zn(2+) as a cofactor. Expressed by the venom gland.

The protein resides in the secreted. Snake venom metalloproteinase that impairs hemostasis in the envenomed animal. The chain is Zinc metalloproteinase-disintegrin-like BITM06A from Bothrops insularis (Golden lancehead).